Here is a 148-residue protein sequence, read N- to C-terminus: FAD synthase (148 aa).

Residues 5 to 6 (TF), 10 to 13 (HPGH), Asp-92, and Tyr-119 contribute to the ATP site.

Belongs to the archaeal FAD synthase family. Homodimer. It depends on a divalent metal cation as a cofactor.

The catalysed reaction is FMN + ATP + H(+) = FAD + diphosphate. It functions in the pathway cofactor biosynthesis; FAD biosynthesis; FAD from FMN: step 1/1. In terms of biological role, catalyzes the transfer of the AMP portion of ATP to flavin mononucleotide (FMN) to produce flavin adenine dinucleotide (FAD) coenzyme. In Methanosphaera stadtmanae (strain ATCC 43021 / DSM 3091 / JCM 11832 / MCB-3), this protein is FAD synthase.